The chain runs to 180 residues: Large ribosomal subunit protein uL6 (180 aa).

Belongs to the universal ribosomal protein uL6 family. As to quaternary structure, part of the 50S ribosomal subunit.

This protein binds to the 23S rRNA, and is important in its secondary structure. It is located near the subunit interface in the base of the L7/L12 stalk, and near the tRNA binding site of the peptidyltransferase center. This is Large ribosomal subunit protein uL6 from Clostridioides difficile (strain 630) (Peptoclostridium difficile).